The sequence spans 556 residues: 2-succinyl-5-enolpyruvyl-6-hydroxy-3-cyclohexene-1-carboxylate synthase (556 aa).

It belongs to the TPP enzyme family. MenD subfamily. Homodimer. Requires Mg(2+) as cofactor. The cofactor is Mn(2+). It depends on thiamine diphosphate as a cofactor.

The catalysed reaction is isochorismate + 2-oxoglutarate + H(+) = 5-enolpyruvoyl-6-hydroxy-2-succinyl-cyclohex-3-ene-1-carboxylate + CO2. It participates in quinol/quinone metabolism; 1,4-dihydroxy-2-naphthoate biosynthesis; 1,4-dihydroxy-2-naphthoate from chorismate: step 2/7. It functions in the pathway quinol/quinone metabolism; menaquinone biosynthesis. In terms of biological role, catalyzes the thiamine diphosphate-dependent decarboxylation of 2-oxoglutarate and the subsequent addition of the resulting succinic semialdehyde-thiamine pyrophosphate anion to isochorismate to yield 2-succinyl-5-enolpyruvyl-6-hydroxy-3-cyclohexene-1-carboxylate (SEPHCHC). The chain is 2-succinyl-5-enolpyruvyl-6-hydroxy-3-cyclohexene-1-carboxylate synthase from Salmonella arizonae (strain ATCC BAA-731 / CDC346-86 / RSK2980).